A 456-amino-acid chain; its full sequence is Bifunctional protein GlmU (456 aa).

Residues 1–229 form a pyrophosphorylase region; it reads MLNNAMSVVI…LSEVEGVNNR (229 aa). UDP-N-acetyl-alpha-D-glucosamine-binding positions include 11–14, Lys-25, Gln-76, 81–82, 103–105, Gly-140, Glu-154, Asn-169, and Asn-227; these read LAAG, GT, and YGD. Position 105 (Asp-105) interacts with Mg(2+). Asn-227 contacts Mg(2+). The tract at residues 230-250 is linker; sequence LQLSRLERVYQSEQAEKLLLA. Residues 251 to 456 form an N-acetyltransferase region; that stretch reads GVMLRDPARF…EGWRRPVKKK (206 aa). Residues Arg-333 and Lys-351 each coordinate UDP-N-acetyl-alpha-D-glucosamine. The active-site Proton acceptor is His-363. Tyr-366 and Asn-377 together coordinate UDP-N-acetyl-alpha-D-glucosamine. Acetyl-CoA is bound by residues Ala-380, 386 to 387, Ser-405, Ala-423, and Arg-440; that span reads NY.

It in the N-terminal section; belongs to the N-acetylglucosamine-1-phosphate uridyltransferase family. The protein in the C-terminal section; belongs to the transferase hexapeptide repeat family. Homotrimer. Requires Mg(2+) as cofactor.

It is found in the cytoplasm. It catalyses the reaction alpha-D-glucosamine 1-phosphate + acetyl-CoA = N-acetyl-alpha-D-glucosamine 1-phosphate + CoA + H(+). The catalysed reaction is N-acetyl-alpha-D-glucosamine 1-phosphate + UTP + H(+) = UDP-N-acetyl-alpha-D-glucosamine + diphosphate. Its pathway is nucleotide-sugar biosynthesis; UDP-N-acetyl-alpha-D-glucosamine biosynthesis; N-acetyl-alpha-D-glucosamine 1-phosphate from alpha-D-glucosamine 6-phosphate (route II): step 2/2. The protein operates within nucleotide-sugar biosynthesis; UDP-N-acetyl-alpha-D-glucosamine biosynthesis; UDP-N-acetyl-alpha-D-glucosamine from N-acetyl-alpha-D-glucosamine 1-phosphate: step 1/1. It functions in the pathway bacterial outer membrane biogenesis; LPS lipid A biosynthesis. Its function is as follows. Catalyzes the last two sequential reactions in the de novo biosynthetic pathway for UDP-N-acetylglucosamine (UDP-GlcNAc). The C-terminal domain catalyzes the transfer of acetyl group from acetyl coenzyme A to glucosamine-1-phosphate (GlcN-1-P) to produce N-acetylglucosamine-1-phosphate (GlcNAc-1-P), which is converted into UDP-GlcNAc by the transfer of uridine 5-monophosphate (from uridine 5-triphosphate), a reaction catalyzed by the N-terminal domain. This is Bifunctional protein GlmU from Shigella boydii serotype 18 (strain CDC 3083-94 / BS512).